Reading from the N-terminus, the 140-residue chain is Putative pre-16S rRNA nuclease (140 aa).

Belongs to the YqgF nuclease family.

Its subcellular location is the cytoplasm. Could be a nuclease involved in processing of the 5'-end of pre-16S rRNA. In Parabacteroides distasonis (strain ATCC 8503 / DSM 20701 / CIP 104284 / JCM 5825 / NCTC 11152), this protein is Putative pre-16S rRNA nuclease.